We begin with the raw amino-acid sequence, 396 residues long: Chalcone synthase (396 aa).

The active site involves Cys169.

It belongs to the thiolase-like superfamily. Chalcone/stilbene synthases family.

It catalyses the reaction (E)-4-coumaroyl-CoA + 3 malonyl-CoA + 3 H(+) = 2',4,4',6'-tetrahydroxychalcone + 3 CO2 + 4 CoA. It functions in the pathway secondary metabolite biosynthesis; flavonoid biosynthesis. Its function is as follows. The primary product of this enzyme is 4,2',4',6'-tetrahydroxychalcone (also termed naringenin-chalcone or chalcone) which can under specific conditions spontaneously isomerize into naringenin. This is Chalcone synthase (CHS) from Pinus sylvestris (Scotch pine).